We begin with the raw amino-acid sequence, 354 residues long: Release factor glutamine methyltransferase (354 aa).

S-adenosyl-L-methionine is bound by residues 174–178, D197, and N241; that span reads GSGSG. Substrate is bound at residue 241–244; that stretch reads NPPY.

Belongs to the protein N5-glutamine methyltransferase family. PrmC subfamily.

The catalysed reaction is L-glutaminyl-[peptide chain release factor] + S-adenosyl-L-methionine = N(5)-methyl-L-glutaminyl-[peptide chain release factor] + S-adenosyl-L-homocysteine + H(+). Its function is as follows. Methylates the class 1 translation termination release factors RF1/PrfA and RF2/PrfB on the glutamine residue of the universally conserved GGQ motif. The chain is Release factor glutamine methyltransferase from Fusobacterium nucleatum subsp. nucleatum (strain ATCC 25586 / DSM 15643 / BCRC 10681 / CIP 101130 / JCM 8532 / KCTC 2640 / LMG 13131 / VPI 4355).